Consider the following 252-residue polypeptide: Pantothenate synthetase (252 aa).

Residue 29-36 coordinates ATP; it reads MGNLHAGH. Residue His-36 is the Proton donor of the active site. (R)-pantoate is bound at residue Gln-60. Gln-60 provides a ligand contact to beta-alanine. 146–149 is an ATP binding site; the sequence is GEKD. Position 152 (Gln-152) interacts with (R)-pantoate. ATP-binding positions include Val-175 and 183–186; that span reads CSSR.

This sequence belongs to the pantothenate synthetase family. Homodimer.

The protein localises to the cytoplasm. The enzyme catalyses (R)-pantoate + beta-alanine + ATP = (R)-pantothenate + AMP + diphosphate + H(+). It participates in cofactor biosynthesis; (R)-pantothenate biosynthesis; (R)-pantothenate from (R)-pantoate and beta-alanine: step 1/1. Functionally, catalyzes the condensation of pantoate with beta-alanine in an ATP-dependent reaction via a pantoyl-adenylate intermediate. In Legionella pneumophila subsp. pneumophila (strain Philadelphia 1 / ATCC 33152 / DSM 7513), this protein is Pantothenate synthetase.